A 298-amino-acid polypeptide reads, in one-letter code: Ribosomal protein L11 methyltransferase (298 aa).

The S-adenosyl-L-methionine site is built by T152, G173, D195, and N234.

It belongs to the methyltransferase superfamily. PrmA family.

The protein localises to the cytoplasm. It carries out the reaction L-lysyl-[protein] + 3 S-adenosyl-L-methionine = N(6),N(6),N(6)-trimethyl-L-lysyl-[protein] + 3 S-adenosyl-L-homocysteine + 3 H(+). Its function is as follows. Methylates ribosomal protein L11. The polypeptide is Ribosomal protein L11 methyltransferase (Ralstonia nicotianae (strain ATCC BAA-1114 / GMI1000) (Ralstonia solanacearum)).